A 623-amino-acid chain; its full sequence is Sphingomyelinase C 2 (623 aa).

A signal peptide spans 1-25 (MINKITKPKLLIGYYLLLFSLIRCL). Low complexity-rich tracts occupy residues 51-61 (VNSVSINNDPA) and 67-80 (NPASANNNQVNAVP). The interval 51-121 (VNSVSINNDP…DPNPANLASA (71 aa)) is disordered. Over residues 89–102 (NPVNPASANSNQVN) the composition is skewed to polar residues. Residues 110-121 (PADPNPANLASA) show a composition bias toward low complexity.

Its subcellular location is the secreted. The enzyme catalyses a sphingomyelin + H2O = phosphocholine + an N-acylsphing-4-enine + H(+). This chain is Sphingomyelinase C 2 (sph2), found in Leptospira interrogans serogroup Icterohaemorrhagiae serovar Lai (strain 56601).